A 73-amino-acid polypeptide reads, in one-letter code: Putative antitoxin VapB38 (73 aa).

Functionally, probable antitoxin component of a type II toxin-antitoxin (TA) system. Its putative cognate toxin is VapC38. This is Putative antitoxin VapB38 (vapB38) from Mycobacterium tuberculosis (strain ATCC 25618 / H37Rv).